The following is a 139-amino-acid chain: GSK3B-interacting protein (139 aa).

The segment at 41–45 is required for PRKAR2A interaction; contributes to a protective effect against H(2)O(2)-induced apoptosis; that stretch reads VNDVL. Positions 115–139 are interaction with GSK3B and acts as a GSK3B inhibitor; it reads SPAYREAFGNALLQRLEALKRDGQS.

It belongs to the GSKIP family. Forms a complex composed of PRKAR2A or PRKAR2B, GSK3B and GSKIP through GSKIP interaction; facilitates PKA-induced phosphorylation of GSK3B leading to GSK3B inactivation; recruits DNM1L through GSK3B for PKA-mediated phosphorylation of DNM1L; promotes beta-catenin degradation through GSK3B-induced phosphorylation of beta-catenin; stabilizes beta-catenin and enhances Wnt-induced signaling through PKA-induced phosphorylation of beta-catenin. Interacts with GSK3B; induces GSK3B-mediated phosphorylation of GSKIP and inhibits GSK3B kinase activity. In terms of processing, phosphorylated by GSK3B.

The protein localises to the cytoplasm. Its subcellular location is the nucleus. Functionally, A-kinase anchoring protein for GSK3B and PKA that regulates or facilitates their kinase activity towards their targets. The ternary complex enhances Wnt-induced signaling by facilitating the GSK3B- and PKA-induced phosphorylation of beta-catenin leading to beta-catenin degradation and stabilization respectively. Upon cAMP activation, the ternary complex contributes to neuroprotection against oxidative stress-induced apoptosis by facilitating the PKA-induced phosphorylation of DML1 and PKA-induced inactivation of GSK3B. During neurite outgrowth promotes neuron proliferation; while increases beta-catenin-induced transcriptional activity through GSK3B kinase activity inhibition, reduces N-cadherin level to promote cell cycle progression. May play a role in cleft palate formation and is required for postnatal life through modulation of the activity of GSK3B during development. The polypeptide is GSK3B-interacting protein (Mus musculus (Mouse)).